Here is a 244-residue protein sequence, read N- to C-terminus: Na(+)-translocating NADH-quinone reductase subunit E (244 aa).

6 helical membrane passes run 11-31 (LLGI…TFLG), 50-70 (MSVA…HYFI), 90-110 (FLEL…LEVL), 123-143 (GIFL…LFGI), 153-173 (VVFS…FATI), and 191-211 (ISFI…GIDI). The segment covering 222-236 (VTNIATDSPQPNTHS) has biased composition (polar residues). Positions 222 to 244 (VTNIATDSPQPNTHSSSEEPKAS) are disordered.

Belongs to the NqrDE/RnfAE family. Composed of six subunits; NqrA, NqrB, NqrC, NqrD, NqrE and NqrF.

It localises to the cell inner membrane. It carries out the reaction a ubiquinone + n Na(+)(in) + NADH + H(+) = a ubiquinol + n Na(+)(out) + NAD(+). Functionally, NQR complex catalyzes the reduction of ubiquinone-1 to ubiquinol by two successive reactions, coupled with the transport of Na(+) ions from the cytoplasm to the periplasm. NqrA to NqrE are probably involved in the second step, the conversion of ubisemiquinone to ubiquinol. This chain is Na(+)-translocating NADH-quinone reductase subunit E, found in Chlamydia trachomatis serovar A (strain ATCC VR-571B / DSM 19440 / HAR-13).